Consider the following 854-residue polypeptide: Alkaline phosphatase-like protein PglZ (854 aa).

This sequence belongs to the alkaline phosphatase superfamily.

Its function is as follows. BREX systems (bacteriophage exclusion) provide immunity against bacteriophage. A core protein of a type 1 BREX system. This system allows phage adsorption but prevents phage DNA replication, without degradation of the phage DNA. Methylation of bacterial DNA by PglX probably guides self/non-self discrimination. When the brxA-brxB-brxC-pglX and pglZ-brxL operons are transformed into a susceptible B.subtilis strain (BEST7003) they confer resistance to bacteriophages SPbeta, SP16, Zeta, phi3T and SP02 and partial protection to phages SP01 and SP82G (these include lytic and temperate phage). They do not protect against phages phi105, rho10 or rho14. Additionally confers a very slight reduction in efficiency of plasmid transformation. This is Alkaline phosphatase-like protein PglZ from Bacillus cereus (strain H3081.97).